We begin with the raw amino-acid sequence, 167 residues long: Phosphopantetheine adenylyltransferase (167 aa).

Residue Thr-10 participates in substrate binding. Residues 10–11 (TF) and His-18 each bind ATP. Residues Lys-42, Leu-75, and Arg-89 each contribute to the substrate site. Residues 90–92 (GVR), Glu-100, and 125–131 (YTYVASS) each bind ATP.

It belongs to the bacterial CoaD family. As to quaternary structure, homohexamer. It depends on Mg(2+) as a cofactor.

The protein localises to the cytoplasm. The catalysed reaction is (R)-4'-phosphopantetheine + ATP + H(+) = 3'-dephospho-CoA + diphosphate. It functions in the pathway cofactor biosynthesis; coenzyme A biosynthesis; CoA from (R)-pantothenate: step 4/5. Functionally, reversibly transfers an adenylyl group from ATP to 4'-phosphopantetheine, yielding dephospho-CoA (dPCoA) and pyrophosphate. This Chlorobium phaeobacteroides (strain DSM 266 / SMG 266 / 2430) protein is Phosphopantetheine adenylyltransferase.